We begin with the raw amino-acid sequence, 380 residues long: Cytochrome b (380 aa).

Helical transmembrane passes span 34–54, 78–99, 114–134, and 179–199; these read FGSL…FLAM, WLLR…YMHI, WNIG…GYVL, and FFAF…VHLL. 2 residues coordinate heme b: His-84 and His-98. Positions 183 and 197 each coordinate heme b. His-202 is a binding site for a ubiquinone. The next 4 membrane-spanning stretches (helical) occupy residues 227–247, 289–309, 321–341, and 348–368; these read YKDV…ALFS, LGGV…PFVH, LAQV…WLGG, and YIFL…LFIP.

It belongs to the cytochrome b family. In terms of assembly, the cytochrome bc1 complex contains 3 respiratory subunits (MT-CYB, CYC1 and UQCRFS1), 2 core proteins (UQCRC1 and UQCRC2) and probably 6 low-molecular weight proteins. Heme b is required as a cofactor.

It localises to the mitochondrion inner membrane. In terms of biological role, component of the ubiquinol-cytochrome c reductase complex (complex III or cytochrome b-c1 complex) that is part of the mitochondrial respiratory chain. The b-c1 complex mediates electron transfer from ubiquinol to cytochrome c. Contributes to the generation of a proton gradient across the mitochondrial membrane that is then used for ATP synthesis. The sequence is that of Cytochrome b (MT-CYB) from Branchiostoma lanceolatum (Common lancelet).